The primary structure comprises 253 residues: Ipsdienol dehydrogenase (253 aa).

Residues 12–40 (VTGG…FSRN) and Asp-63 each bind NAD(+). Ser-149 is a substrate binding site. Tyr-162 serves as the catalytic Proton acceptor. NAD(+) is bound at residue Lys-166.

Belongs to the short-chain dehydrogenases/reductases (SDR) family. In terms of tissue distribution, specifically expressed in male midguts. Expressed at higher level in the anterior midgut of fed males.

The protein localises to the cytoplasm. The protein resides in the cytosol. The catalysed reaction is (4R)-ipsdienol + NADP(+) = ipsdienone + NADPH + H(+). The enzyme catalyses (4R)-ipsdienol + NAD(+) = ipsdienone + NADH + H(+). Functionally, catalyzes the oxidation of racemic ipsdienol and (4R)-(-)-ipsdienol to form ipsdienone (2-methyl-6-methylene-2,7-octadien-4-one), an intermediate in the biosynthesis of pheromonal ipsdienol in male pine engraver beetles. In contrast, (4S)-(+)-ipsdienol is not a substrate. This Ips pini (Pine engraver beetle) protein is Ipsdienol dehydrogenase.